A 361-amino-acid polypeptide reads, in one-letter code: MAGNTIGQLFRVTTFGESHGLALGCIVDGVPPGIPLTEADLQHDLDRRRPGTSRYTTQRREPDQVKILSGVFDGVTTGTSIGLLIENTDQRSQDYSAIKDVFRPGHADYTYEQKYGLRDYRGGGRSSARETAMRVAAGAIAKKYLAEKFGIEIRGCLTQMGDIPLEIKDWRQVELNPFFCPDADKLDALDELMRALKKEGDSIGAKVTVMASGVPAGLGEPVFDRLDADIAHALMSINAVKGVEIGEGFNVVALRGSQNRDEITAQGFQSNHAGGILGGISSGQHIVAHMALKPTSSITVPGRTINRAGEEVEMITKGRHDPCVGIRAVPIAEAMLAIVLMDHLLRHRAQNADVKTEIPRW.

Arginine 48 and arginine 54 together coordinate NADP(+). FMN contacts are provided by residues 125–127 (RSS), 238–239 (NA), glycine 278, 293–297 (KPTSS), and arginine 319.

The protein belongs to the chorismate synthase family. As to quaternary structure, homotetramer. FMNH2 serves as cofactor.

The enzyme catalyses 5-O-(1-carboxyvinyl)-3-phosphoshikimate = chorismate + phosphate. It functions in the pathway metabolic intermediate biosynthesis; chorismate biosynthesis; chorismate from D-erythrose 4-phosphate and phosphoenolpyruvate: step 7/7. Its function is as follows. Catalyzes the anti-1,4-elimination of the C-3 phosphate and the C-6 proR hydrogen from 5-enolpyruvylshikimate-3-phosphate (EPSP) to yield chorismate, which is the branch point compound that serves as the starting substrate for the three terminal pathways of aromatic amino acid biosynthesis. This reaction introduces a second double bond into the aromatic ring system. In Salmonella choleraesuis (strain SC-B67), this protein is Chorismate synthase.